The chain runs to 373 residues: UDP-N-acetylglucosamine--N-acetylmuramyl-(pentapeptide) pyrophosphoryl-undecaprenol N-acetylglucosamine transferase (373 aa).

Residues 13-15, asparagine 124, arginine 165, serine 192, and glutamine 293 each bind UDP-N-acetyl-alpha-D-glucosamine; that span reads TGG.

It belongs to the glycosyltransferase 28 family. MurG subfamily.

It is found in the cell inner membrane. It carries out the reaction di-trans,octa-cis-undecaprenyl diphospho-N-acetyl-alpha-D-muramoyl-L-alanyl-D-glutamyl-meso-2,6-diaminopimeloyl-D-alanyl-D-alanine + UDP-N-acetyl-alpha-D-glucosamine = di-trans,octa-cis-undecaprenyl diphospho-[N-acetyl-alpha-D-glucosaminyl-(1-&gt;4)]-N-acetyl-alpha-D-muramoyl-L-alanyl-D-glutamyl-meso-2,6-diaminopimeloyl-D-alanyl-D-alanine + UDP + H(+). The protein operates within cell wall biogenesis; peptidoglycan biosynthesis. Cell wall formation. Catalyzes the transfer of a GlcNAc subunit on undecaprenyl-pyrophosphoryl-MurNAc-pentapeptide (lipid intermediate I) to form undecaprenyl-pyrophosphoryl-MurNAc-(pentapeptide)GlcNAc (lipid intermediate II). In Sinorhizobium fredii (strain NBRC 101917 / NGR234), this protein is UDP-N-acetylglucosamine--N-acetylmuramyl-(pentapeptide) pyrophosphoryl-undecaprenol N-acetylglucosamine transferase.